A 436-amino-acid polypeptide reads, in one-letter code: Diaminobutyrate--2-oxoglutarate transaminase (436 aa).

At lysine 269 the chain carries N6-(pyridoxal phosphate)lysine.

The protein belongs to the class-III pyridoxal-phosphate-dependent aminotransferase family. Pyridoxal 5'-phosphate serves as cofactor.

It catalyses the reaction L-2,4-diaminobutanoate + 2-oxoglutarate = L-aspartate 4-semialdehyde + L-glutamate. It functions in the pathway amine and polyamine biosynthesis; ectoine biosynthesis; L-ectoine from L-aspartate 4-semialdehyde: step 1/3. Its function is as follows. Catalyzes reversively the conversion of L-aspartate beta-semialdehyde (ASA) to L-2,4-diaminobutyrate (DABA) by transamination with L-glutamate. The polypeptide is Diaminobutyrate--2-oxoglutarate transaminase (ectB) (Nocardia farcinica (strain IFM 10152)).